We begin with the raw amino-acid sequence, 279 residues long: 4-diphosphocytidyl-2-C-methyl-D-erythritol kinase (279 aa).

Residue Lys11 is part of the active site. 95–105 (PVAAGLGGGSS) provides a ligand contact to ATP. Residue Asp137 is part of the active site.

It belongs to the GHMP kinase family. IspE subfamily.

It catalyses the reaction 4-CDP-2-C-methyl-D-erythritol + ATP = 4-CDP-2-C-methyl-D-erythritol 2-phosphate + ADP + H(+). Its pathway is isoprenoid biosynthesis; isopentenyl diphosphate biosynthesis via DXP pathway; isopentenyl diphosphate from 1-deoxy-D-xylulose 5-phosphate: step 3/6. Functionally, catalyzes the phosphorylation of the position 2 hydroxy group of 4-diphosphocytidyl-2C-methyl-D-erythritol. The chain is 4-diphosphocytidyl-2-C-methyl-D-erythritol kinase from Geotalea daltonii (strain DSM 22248 / JCM 15807 / FRC-32) (Geobacter daltonii).